Reading from the N-terminus, the 380-residue chain is MQAKFFTFVILSSVFYFNYPLAEARSIQARLANKPKGTIKTIKGDDGEVVDCVDIYKQPAFDHPLLKNHTLQMQPSSYASKVGEYNKLEQPWHKNGECPKGSIPIRRQVITGLPVVKKQFPNLKFAPPSANTNHQYAVIAYFYGNASLQGANATINIWEPNLKNPNGDFSLTQIWISAGSGSSLNTIEAGWQVYPGRTGDSQPRFFIYWTADGYTSTGCYDLTCPGFVQTNNYYAIGMALQPSVYGGQQYELNESIQRDPATGNWWLYLWGTVVGYWPASIYNSITNGADTVEWGGEIYDSSGTGGFHTTTQMGSGHFPTEGYGKASYVRDLQCVDTYGNVISPTANSFQGIAPAPNCYNYQFQQGSSELYLFYGGPGCQ.

The N-terminal stretch at 1-24 (MQAKFFTFVILSSVFYFNYPLAEA) is a signal peptide. The propeptide at 25-128 (RSIQARLANK…QFPNLKFAPP (104 aa)) is activation peptide. A disulfide bond links cysteine 52 and cysteine 98. N-linked (GlcNAc...) asparagine glycosylation is found at asparagine 68, asparagine 145, and asparagine 152. Positions 129–380 (SANTNHQYAV…YLFYGGPGCQ (252 aa)) constitute a Neprosin PEP catalytic domain. The active site involves glutamate 188. Cysteines 219 and 224 form a disulfide. N-linked (GlcNAc...) asparagine glycosylation occurs at asparagine 253. Residue glutamate 297 is part of the active site. Cysteine 358 and cysteine 379 are joined by a disulfide.

This sequence belongs to the peptidase G3 family.

The protein resides in the secreted. The catalysed reaction is Hydrolysis of Pro-|-Xaa &gt;&gt; Ala-|-Xaa in oligopeptides.. Weakly inhibited by the aspartic protease inhibitor pepstatin. Weakly inhibited by pepstatin A (IC(50) of 140 uM) and 1,2-epoxy-3-(p-nitrophenoxy)propane (EPNP) (IC(50) of 480 uM). Activity is not affected by the POP inhibitor Z-Pro-prolinal inhibitor or the denaturant urea. In terms of biological role, glutamic endopeptidase that preferentially cleaves peptide bonds on the C-terminal side of proline residues. Also cleaves peptide bonds on the C-terminal side of alanine residues but with less efficiency. In contrast to most proline-cleaving enzymes, effectively degrades proteins of any size. Found in the viscoelastic fluid of the pitcher, and so likely functions in the digestion of their prey. The polypeptide is Protein neprosin (Nepenthes x ventrata (Red tropical pitcher plant)).